The following is a 304-amino-acid chain: DCN1-like protein 3 (304 aa).

Disordered stretches follow at residues 1-87 (MGQC…EESS) and 285-304 (VEGR…EEQT). A lipid anchor (N-myristoyl glycine) is attached at Gly-2. Positions 86 to 278 (SSLQRLEELF…LFDTFVEWEM (193 aa)) constitute a DCUN1 domain.

As to quaternary structure, part of a complex containing DCUN1D3, CUL3 and RBX1. Interacts (via the DCUN1 domain) with the unneddylated cullins: interacts with CUL1, CUL2, CUL3, CUL4A, CUL4B and CUL5; these interactions promote the cullin neddylation and the identity of the cullin dictates the affinity of the interaction. Interacts preferentially with CUL3; this interaction triggers the relocalization of CUL3 to the cell membrane where CUL3 is neddylated. Interacts (via DCUN1 domain) with RBX1. May also interact with regulators or subunits of cullin-RING ligases such as RNF7, ELOB and DDB1; these interactions are bridged by cullins. Interacts (via DCUN1 domain) with CAND1; this interaction is bridged by cullins and strongly inhibits cullin neddylation. These CAND-cullin-DCNL complexes can only be neddylated in the presence of a substrate adapter. Interacts (via DCUN1 domain) with the N-terminally acetylated form of UBE2M and UBE2F.

It localises to the cell membrane. The protein localises to the cytoplasm. It is found in the nucleus. Its subcellular location is the perinuclear region. Its function is as follows. Contributes to the neddylation of all cullins by transferring NEDD8 from N-terminally acetylated NEDD8-conjugating E2s enzyme to different cullin C-terminal domain-RBX complexes and may play a role in the cell cycle progression by regulating the SCF ubiquitin E3 ligase complex, after UV damage. At the cell membrane, can promote and as well inhibit cullins neddylation. This Rattus norvegicus (Rat) protein is DCN1-like protein 3.